The primary structure comprises 329 residues: Calcium homeostasis modulator protein (329 aa).

Topologically, residues 1–14 are cytoplasmic; that stretch reads MTTSINSVVTVFQN. The chain crosses the membrane as a helical span at residues 15–35; sequence VFTNHGSTLLNGILIATTVGG. Residues 36 to 53 are Extracellular-facing; that stretch reads QSLVRKLTFSCPCAYPLN. Residues 54–74 traverse the membrane as a helical segment; that stretch reads IYHSLVFMFGPTAALLLIGIT. The Cytoplasmic segment spans residues 75–103; it reads VNSTTWKLAHGFFFRVRDTRHSWKTTCVS. Residues 104 to 124 form a helical membrane-spanning segment; that stretch reads WIEVLIQSSVAPIAWLFVVFL. Over 125–191 the chain is Extracellular; that stretch reads DGGYYRCYRS…DASYLEAESQ (67 aa). An N-linked (GlcNAc...) asparagine glycan is attached at Asn148. The helical transmembrane segment at 192–212 threads the bilayer; it reads IYAWGLLLFSGVAAFLVITCN. Over 213 to 329 the chain is Cytoplasmic; that stretch reads RMCDKYTLVQ…QIIVDETKED (117 aa).

It belongs to the CALHM family. As to expression, expressed in head and body wall muscles, IL2, ASG, ASI, ASJ, PHA and PHB sensory neurons, and spermatheca.

It localises to the cell membrane. In terms of biological role, pore-forming subunit of a voltage-gated ion channel. Permeable to monovalent cations, divalent cations and anions with selectivity Ca(2+) &gt; Mg(2+) &gt; Na(+) = K(+) &gt; Cl(-). Acts both as a voltage-gated and calcium-activated ion channel. Required for normal locomotion. The polypeptide is Calcium homeostasis modulator protein (Caenorhabditis elegans).